The following is a 378-amino-acid chain: Ribosomal RNA large subunit methyltransferase G (378 aa).

The protein belongs to the methyltransferase superfamily. RlmG family.

The protein resides in the cytoplasm. The catalysed reaction is guanosine(1835) in 23S rRNA + S-adenosyl-L-methionine = N(2)-methylguanosine(1835) in 23S rRNA + S-adenosyl-L-homocysteine + H(+). Its function is as follows. Specifically methylates the guanine in position 1835 (m2G1835) of 23S rRNA. The polypeptide is Ribosomal RNA large subunit methyltransferase G (Citrobacter koseri (strain ATCC BAA-895 / CDC 4225-83 / SGSC4696)).